A 251-amino-acid chain; its full sequence is Adenosylcobinamide-GDP ribazoletransferase (251 aa).

The next 7 helical transmembrane spans lie at 36 to 56 (LYPF…FVLS), 60 to 80 (VPIM…TGFL), 110 to 130 (VGAF…AGMF), 141 to 161 (ILIF…VSQE), 181 to 201 (EIIL…TLGI), 202 to 222 (NYLI…LKVK), and 231 to 251 (DVAG…LGII).

The protein belongs to the CobS family. Mg(2+) serves as cofactor.

The protein resides in the cell membrane. The enzyme catalyses alpha-ribazole + adenosylcob(III)inamide-GDP = adenosylcob(III)alamin + GMP + H(+). It carries out the reaction alpha-ribazole 5'-phosphate + adenosylcob(III)inamide-GDP = adenosylcob(III)alamin 5'-phosphate + GMP + H(+). The protein operates within cofactor biosynthesis; adenosylcobalamin biosynthesis; adenosylcobalamin from cob(II)yrinate a,c-diamide: step 7/7. Joins adenosylcobinamide-GDP and alpha-ribazole to generate adenosylcobalamin (Ado-cobalamin). Also synthesizes adenosylcobalamin 5'-phosphate from adenosylcobinamide-GDP and alpha-ribazole 5'-phosphate. The sequence is that of Adenosylcobinamide-GDP ribazoletransferase from Clostridium perfringens (strain ATCC 13124 / DSM 756 / JCM 1290 / NCIMB 6125 / NCTC 8237 / Type A).